The primary structure comprises 248 residues: Granulin (248 aa).

It belongs to the polyhedrin family.

Component of the virus occlusion bodies, which are large proteinaceous structures, that protect the virus from the outside environment for extended periods until they are ingested by insect larvae. The sequence is that of Granulin from Xestia c-nigrum granulosis virus (XnGV).